The following is a 254-amino-acid chain: 3-dehydroquinate dehydratase (254 aa).

3-dehydroquinate contacts are provided by residues 47–49 (EWR) and Arg83. His144 functions as the Proton donor/acceptor in the catalytic mechanism. The active-site Schiff-base intermediate with substrate is the Lys171. Residues Arg214, Ser233, and Gln237 each contribute to the 3-dehydroquinate site.

It belongs to the type-I 3-dehydroquinase family. In terms of assembly, homodimer.

The catalysed reaction is 3-dehydroquinate = 3-dehydroshikimate + H2O. The protein operates within metabolic intermediate biosynthesis; chorismate biosynthesis; chorismate from D-erythrose 4-phosphate and phosphoenolpyruvate: step 3/7. In terms of biological role, involved in the third step of the chorismate pathway, which leads to the biosynthesis of aromatic amino acids. Catalyzes the cis-dehydration of 3-dehydroquinate (DHQ) and introduces the first double bond of the aromatic ring to yield 3-dehydroshikimate. This Clostridium botulinum (strain Eklund 17B / Type B) protein is 3-dehydroquinate dehydratase.